Reading from the N-terminus, the 242-residue chain is tRNA (guanine-N(1)-)-methyltransferase (242 aa).

S-adenosyl-L-methionine contacts are provided by residues glycine 113 and 133 to 138 (IGDYVL).

Belongs to the RNA methyltransferase TrmD family. In terms of assembly, homodimer.

Its subcellular location is the cytoplasm. The catalysed reaction is guanosine(37) in tRNA + S-adenosyl-L-methionine = N(1)-methylguanosine(37) in tRNA + S-adenosyl-L-homocysteine + H(+). Its function is as follows. Specifically methylates guanosine-37 in various tRNAs. The polypeptide is tRNA (guanine-N(1)-)-methyltransferase (Shewanella sediminis (strain HAW-EB3)).